Consider the following 554-residue polypeptide: Probable oligo-1,6-glucosidase 3 (554 aa).

Asp-199 functions as the Nucleophile in the catalytic mechanism. Glu-256 acts as the Proton donor in catalysis.

It belongs to the glycosyl hydrolase 13 family.

Its subcellular location is the cytoplasm. The enzyme catalyses Hydrolysis of (1-&gt;6)-alpha-D-glucosidic linkages in some oligosaccharides produced from starch and glycogen by alpha-amylase, and in isomaltose.. This is Probable oligo-1,6-glucosidase 3 (yugT) from Bacillus subtilis (strain 168).